We begin with the raw amino-acid sequence, 500 residues long: Probable malate:quinone oxidoreductase (500 aa).

This sequence belongs to the MQO family. The cofactor is FAD.

The enzyme catalyses (S)-malate + a quinone = a quinol + oxaloacetate. Its pathway is carbohydrate metabolism; tricarboxylic acid cycle; oxaloacetate from (S)-malate (quinone route): step 1/1. The chain is Probable malate:quinone oxidoreductase from Bacillus cytotoxicus (strain DSM 22905 / CIP 110041 / 391-98 / NVH 391-98).